The chain runs to 219 residues: Alpha N-terminal protein methyltransferase 1 (219 aa).

Residues glycine 64, arginine 69, 111–112 (LQ), and glutamine 127 each bind S-adenosyl-L-methionine.

It belongs to the methyltransferase superfamily. NTM1 family.

It is found in the cytoplasm. The catalysed reaction is N-terminal L-alanyl-L-prolyl-L-lysyl-[protein] + 3 S-adenosyl-L-methionine = N-terminal N,N,N-trimethyl-L-alanyl-L-prolyl-L-lysyl-[protein] + 3 S-adenosyl-L-homocysteine + 3 H(+). It carries out the reaction N-terminal L-seryl-L-prolyl-L-lysyl-[protein] + 3 S-adenosyl-L-methionine = N-terminal N,N,N-trimethyl-L-seryl-L-prolyl-L-lysyl-[protein] + 3 S-adenosyl-L-homocysteine + 3 H(+). The enzyme catalyses N-terminal L-prolyl-L-prolyl-L-lysyl-[protein] + 2 S-adenosyl-L-methionine = N-terminal N,N-dimethyl-L-prolyl-L-prolyl-L-lysyl-[protein] + 2 S-adenosyl-L-homocysteine + 2 H(+). Functionally, alpha-N-methyltransferase that methylates the N-terminus of target proteins containing the N-terminal motif [Ala/Pro/Ser]-Pro-Lys when the initiator Met is cleaved. Specifically catalyzes mono-, di- or tri-methylation of exposed alpha-amino group of Ala or Ser residue in the [Ala/Ser]-Pro-Lys motif and mono- or di-methylation of Pro in the Pro-Pro-Lys motif. This chain is Alpha N-terminal protein methyltransferase 1 (tae1), found in Schizosaccharomyces pombe (strain 972 / ATCC 24843) (Fission yeast).